Reading from the N-terminus, the 253-residue chain is MANLGCWMLVLFVATWSNLGLCKKRPKPGGWNTGGSRYPGQGSPGGNRYPPQGGGGWGQPHGGGWGQPHGGGWGQPHGGGWGQPHGGGWGQGGGTHSQWNKPSKPKTNMKHMAGAAAAGAVVGGLGGYMLGSAMSRPIIHFGNDYEDRYYRENMYRYPNQVYYRPVDQYSNQNNFVHDCVNITIKQHTVTTTTKGENFTETDVKMMERVVEQMCITQYERESQAYYQRGSSMVLFSSPPVILLISFLIFLIVG.

Positions 1–22 (MANLGCWMLVLFVATWSNLGLC) are cleaved as a signal peptide. Positions 23–38 (KKRPKPGGWNTGGSRY) are interaction with ADGRG6. An interaction with GRB2, ERI3 and SYN1 region spans residues 23–230 (KKRPKPGGWN…ESQAYYQRGS (208 aa)). Positions 25 to 108 (RPKPGGWNTG…WNKPSKPKTN (84 aa)) are disordered. Tandem repeats lie at residues 51–59 (PQGGGGWGQ), 60–67 (PHGGGWGQ), 68–75 (PHGGGWGQ), 76–83 (PHGGGWGQ), and 84–91 (PHGGGWGQ). Residues 51 to 91 (PQGGGGWGQPHGGGWGQPHGGGWGQPHGGGWGQPHGGGWGQ) are 5 X 8 AA tandem repeats of P-H-G-G-G-W-G-Q. Residues 52-95 (QGGGGWGQPHGGGWGQPHGGGWGQPHGGGWGQPHGGGWGQGGGT) are compositionally biased toward gly residues. Residues His-61, Gly-62, Gly-63, His-69, Gly-70, Gly-71, His-77, Gly-78, Gly-79, His-85, Gly-86, and Gly-87 each coordinate Cu(2+). A disulfide bond links Cys-179 and Cys-214. 2 N-linked (GlcNAc...) asparagine glycosylation sites follow: Asn-181 and Asn-197. Ser-230 is lipidated: GPI-anchor amidated serine. A propeptide spans 231–253 (SMVLFSSPPVILLISFLIFLIVG) (removed in mature form).

The protein belongs to the prion family. Monomer and homodimer. Has a tendency to aggregate into amyloid fibrils containing a cross-beta spine, formed by a steric zipper of superposed beta-strands. Soluble oligomers may represent an intermediate stage on the path to fibril formation. Copper binding may promote oligomerization. Interacts with GRB2, APP, ERI3/PRNPIP and SYN1. Mislocalized cytosolically exposed PrP interacts with MGRN1; this interaction alters MGRN1 subcellular location and causes lysosomal enlargement. Interacts with APP. Interacts with KIAA1191. Interacts with ADGRG6.

Its subcellular location is the cell membrane. It localises to the golgi apparatus. Its function is as follows. Its primary physiological function is unclear. May play a role in neuronal development and synaptic plasticity. May be required for neuronal myelin sheath maintenance. May promote myelin homeostasis through acting as an agonist for ADGRG6 receptor. May play a role in iron uptake and iron homeostasis. Soluble oligomers are toxic to cultured neuroblastoma cells and induce apoptosis (in vitro). Association with GPC1 (via its heparan sulfate chains) targets PRNP to lipid rafts. Also provides Cu(2+) or Zn(2+) for the ascorbate-mediated GPC1 deaminase degradation of its heparan sulfate side chains. This is Major prion protein (PRNP) from Pongo pygmaeus (Bornean orangutan).